Here is a 103-residue protein sequence, read N- to C-terminus: Protamine-2 (103 aa).

The tract at residues 1–103 (MVRYRTRSLS…RTRRRRCRRY (103 aa)) is disordered. A phosphoserine mark is found at serine 8 and serine 10. The segment covering 8-17 (SLSERPHEVH) has biased composition (basic and acidic residues). The segment covering 18–29 (GQQVHGQDQGHN) has biased composition (low complexity). A Phosphoserine modification is found at serine 37. A compositionally biased stretch (basic and acidic residues) spans 39-48 (EHVEVYERTH). Over residues 49 to 103 (QGHSHHRRRRCSQRRLHRIHRRRHRSCRRRRRRSCRHRRRHRRGCRTRRRRCRRY) the composition is skewed to basic residues.

This sequence belongs to the protamine P2 family. Interacts with TDRP. Proteolytic processing into mature chains is required for histone eviction during spermatogenesis. Transition proteins (TNP1 and TNP2) are required for processing. As to expression, testis.

Its subcellular location is the nucleus. It localises to the chromosome. Functionally, protamines substitute for histones in the chromatin of sperm during the haploid phase of spermatogenesis. They compact sperm DNA into a highly condensed, stable and inactive complex. The protein is Protamine-2 (PRM2) of Erythrocebus patas (Red guenon).